The following is a 662-amino-acid chain: Pollen receptor-like kinase 1 (662 aa).

A signal peptide spans 1 to 31; that stretch reads MPPMQARTLSVYNVMVPLVCLLLFFSTPTHG. The Extracellular portion of the chain corresponds to 32-256; it reads LSDSEAILKF…ARPKSSSRGP (225 aa). LRR repeat units lie at residues 79-98, 99-121, 122-144, 147-169, 171-191, and 192-214; these read QMEN…SGLT, SLRT…KKLA, ALKS…AFEG, WLKK…VAKL, KLLE…EFEH, and QLHL…LSMT. N-linked (GlcNAc...) asparagine glycosylation is present at N197. Positions 233–253 are disordered; sequence ECDSPYIEHPPQSEARPKSSS. The helical transmembrane segment at 257 to 277 threads the bilayer; it reads LVITAIVAALTILIILGVIFL. Topologically, residues 278-662 are cytoplasmic; that stretch reads LNRSYKNKKP…GESCESISFA (385 aa). Positions 288-330 are disordered; that stretch reads RLAVETGPSSLQKKTGIREADQSRRDRKKADHRKGSGTTKRMG. Residues 357–639 enclose the Protein kinase domain; the sequence is KASAEILGSG…EREGDDDDFY (283 aa). S359 is modified (phosphoserine). ATP contacts are provided by residues 363–371 and K385; that span reads LGSGCFGAS. S437 is modified (phosphoserine). T457 is subject to Phosphothreonine. Y527 is subject to Phosphotyrosine. Residues 636 to 662 form a disordered region; that stretch reads DDFYSTYVSETDGRSSKGESCESISFA. Basic and acidic residues predominate over residues 646–655; it reads TDGRSSKGES.

Belongs to the protein kinase superfamily. Ser/Thr protein kinase family. Interacts in vitro with ROPGEF1 (via PRONE domain). Expressed in pollen and/or in flowers, but not in leaves.

The protein localises to the cell membrane. It catalyses the reaction L-seryl-[protein] + ATP = O-phospho-L-seryl-[protein] + ADP + H(+). The catalysed reaction is L-threonyl-[protein] + ATP = O-phospho-L-threonyl-[protein] + ADP + H(+). In terms of biological role, receptor-like kinase involved in the control of pollen germination and pollen tube polar growth. The chain is Pollen receptor-like kinase 1 from Arabidopsis thaliana (Mouse-ear cress).